The sequence spans 362 residues: Notoamide biosynthesis cluster protein J' (362 aa).

An N-terminal signal peptide occupies residues 1–22; it reads MRNMATMLHLLTLILLTSPAST. Asn157, Asn190, Asn280, and Asn338 each carry an N-linked (GlcNAc...) asparagine glycan.

Functionally, part of the gene cluster that mediates the biosynthesis of notoamide, a fungal indole alkaloid that belongs to a family of natural products containing a characteristic bicyclo[2.2.2]diazaoctane core. The first step of notoamide biosynthesis involves coupling of L-proline and L-tryptophan by the bimodular NRPS notE', to produce cyclo-L-tryptophan-L-proline called brevianamide F. The reverse prenyltransferase notF' then acts as a deoxybrevianamide E synthase and converts brevianamide F to deoxybrevianamide E via reverse prenylation at C-2 of the indole ring leading to the bicyclo[2.2.2]diazaoctane core. Deoxybrevianamide E is further hydroxylated at C-6 of the indole ring, likely catalyzed by the cytochrome P450 monooxygenase notG', to yield 6-hydroxy-deoxybrevianamide E. 6-hydroxy-deoxybrevianamide E is a specific substrate of the prenyltransferase notC' for normal prenylation at C-7 to produce 6-hydroxy-7-prenyl-deoxybrevianamide, also called notoamide S. As the proposed pivotal branching point in notoamide biosynthesis, notoamide S can be diverted to notoamide E through an oxidative pyran ring closure putatively catalyzed by either notH' cytochrome P450 monooxygenase or the notD' FAD-linked oxidoreductase. This step would be followed by an indole 2,3-epoxidation-initiated pinacol-like rearrangement catalyzed by the notB' FAD-dependent monooxygenase leading to the formation of notoamide C and notoamide D. On the other hand notoamide S is converted to notoamide T by notH' (or notD'), a bifunctional oxidase that also functions as the intramolecular Diels-Alderase responsible for generation of (-)-notoamide T. To generate antipodal (+)-notoaminide T, notH (or notD) in Aspergillus strain MF297-2 is expected to catalyze a Diels-Alder reaction leading to the opposite stereochemistry. The remaining oxidoreductase notD' (or notH') likely catalyzes the oxidative pyran ring formation to yield (-)-stephacidin A. The FAD-dependent monooxygenase notI' is highly similar to notB' and is predicted to catalyze a similar conversion from (-)-stephacidin A to (+)-notoamide B via the 2,3-epoxidation of (-)-stephacidin A followed by a pinacol-type rearrangement. Finally, it remains unclear which enzyme could be responsible for the final hydroxylation steps leading to notoamide A and sclerotiamide. The function of notJ' in the notoamide biosynthesis has not been determined yet. The protein is Notoamide biosynthesis cluster protein J' of Aspergillus versicolor.